A 37-amino-acid chain; its full sequence is Calcitonin gene-related peptide 1 (37 aa).

Cys2 and Cys7 are oxidised to a cystine. Position 37 is a phenylalanine amide (Phe37).

It belongs to the calcitonin family.

The protein localises to the secreted. In terms of biological role, CGRP1/CALCA is a peptide hormone that induces vasodilation mediated by the CALCRL-RAMP1 receptor complex. Dilates a variety of vessels including the coronary, cerebral and systemic vasculature. Its abundance in the CNS also points toward a neurotransmitter or neuromodulator role. It also elevates platelet cAMP. CGRP1 can also bind and activate CALCR-RAMP1 (AMYR1) receptor complex. In Sus scrofa (Pig), this protein is Calcitonin gene-related peptide 1 (CALCA).